The chain runs to 112 residues: cAMP-regulated phosphoprotein 19 (112 aa).

The residue at position 1 (Met1) is an N-acetylmethionine. The span at 1–11 shows a compositional bias: low complexity; sequence MSAEVPEAASA. Residues 1-49 are disordered; that stretch reads MSAEVPEAASAEEQKEMEDKVTSPEKAEEAKLKARYPHLGQKPGGSDFL. Ser2 is modified (N-acetylserine). Phosphoserine occurs at positions 2 and 23. The span at 12–32 shows a compositional bias: basic and acidic residues; that stretch reads EEQKEMEDKVTSPEKAEEAKL. Ser62 and Ser104 each carry phosphoserine; by GWL. The tract at residues 73–112 is disordered; sequence KNKQLPTAAPDKTEVTGDHIPTPQDLPQRKPSLVASKLAG. Phosphoserine; by PKA is present on Ser104. Lys109 carries the post-translational modification N6-acetyllysine.

Belongs to the endosulfine family. In terms of assembly, interacts (when phosphorylated at Ser-62) with PPP2R2D. Interacts with SNCA. Interacts with PPP2R2A; the interaction is direct and this interaction inhibits PP2A activity. Post-translationally, phosphorylation at Ser-62 by MASTL/GWL during mitosis is essential for interaction with PPP2R2D (PR55-delta) and subsequent inactivation of PP2A. Phosphorylated by PKA.

It is found in the cytoplasm. Functionally, protein phosphatase inhibitor that specifically inhibits protein phosphatase 2A (PP2A) during mitosis. Inhibition of PP2A is enhanced when ARPP19 is phosphorylated. When phosphorylated at Ser-62 during mitosis, specifically interacts with PPP2R2D (PR55-delta) and inhibits its activity, leading to inactivation of PP2A, an essential condition to keep cyclin-B1-CDK1 activity high during M phase. May indirectly enhance GAP-43 expression. In Homo sapiens (Human), this protein is cAMP-regulated phosphoprotein 19 (ARPP19).